A 299-amino-acid chain; its full sequence is Recombination-associated protein RdgC (299 aa).

It belongs to the RdgC family.

Its subcellular location is the cytoplasm. It localises to the nucleoid. Its function is as follows. May be involved in recombination. This is Recombination-associated protein RdgC from Neisseria meningitidis serogroup A / serotype 4A (strain DSM 15465 / Z2491).